We begin with the raw amino-acid sequence, 185 residues long: Ribosome-recycling factor (185 aa).

It belongs to the RRF family.

The protein localises to the cytoplasm. Responsible for the release of ribosomes from messenger RNA at the termination of protein biosynthesis. May increase the efficiency of translation by recycling ribosomes from one round of translation to another. This chain is Ribosome-recycling factor, found in Roseiflexus castenholzii (strain DSM 13941 / HLO8).